The following is a 295-amino-acid chain: Iron-sulfur cluster carrier protein (295 aa).

ATP is bound at residue glycine 38–serine 45.

It belongs to the Mrp/NBP35 ATP-binding proteins family. Homodimer.

Functionally, binds and transfers iron-sulfur (Fe-S) clusters to target apoproteins. Can hydrolyze ATP. The polypeptide is Iron-sulfur cluster carrier protein (Pyrococcus horikoshii (strain ATCC 700860 / DSM 12428 / JCM 9974 / NBRC 100139 / OT-3)).